A 370-amino-acid chain; its full sequence is Heme A synthase (370 aa).

Transmembrane regions (helical) follow at residues valine 15–alanine 35, valine 104–proline 124, alanine 129–alanine 149, valine 161–leucine 181, alanine 200–leucine 220, glutamine 261–isoleucine 280, glycine 293–leucine 313, and proline 317–leucine 337. A heme-binding site is contributed by histidine 264. Residue histidine 324 coordinates heme.

The protein belongs to the COX15/CtaA family. Type 2 subfamily. As to quaternary structure, interacts with CtaB. Heme b is required as a cofactor.

Its subcellular location is the cell membrane. The catalysed reaction is Fe(II)-heme o + 2 A + H2O = Fe(II)-heme a + 2 AH2. It participates in porphyrin-containing compound metabolism; heme A biosynthesis; heme A from heme O: step 1/1. Functionally, catalyzes the conversion of heme O to heme A by two successive hydroxylations of the methyl group at C8. The first hydroxylation forms heme I, the second hydroxylation results in an unstable dihydroxymethyl group, which spontaneously dehydrates, resulting in the formyl group of heme A. The polypeptide is Heme A synthase (Rhodopseudomonas palustris (strain TIE-1)).